The primary structure comprises 305 residues: HTH-type transcriptional regulator KdgR (305 aa).

In terms of domain architecture, HTH iclR-type spans 55–116; the sequence is VSSVLKVFGI…GESEKYSLTL (62 aa). A DNA-binding region (H-T-H motif) is located at residues 76 to 95; sequence ITELSQRVMMSKSTVYRFLQ. The IclR-ED domain occupies 131–300; it reads LIRSADIQMR…ARNISDQMGY (170 aa).

Homodimer.

The protein localises to the cytoplasm. Its function is as follows. Transcriptional repressor that negatively regulates the expression of genes involved in pectinolysis and in pectinase secretion. Controls genes involved in pectin catabolism, including the pectinase genes (pelA, pelB, pelC, pelE), genes involved in pectin catabolism (kdgT, ogl, kduI-kdgF) and the outT gene involved in pectinase secretion. Acts by binding directly to KdgR binding sites (KdgR-box) in the gene operator/promoter region. This is HTH-type transcriptional regulator KdgR from Dickeya chrysanthemi (Pectobacterium chrysanthemi).